The primary structure comprises 125 residues: Small ribosomal subunit protein eS8 (125 aa).

This sequence belongs to the eukaryotic ribosomal protein eS8 family. As to quaternary structure, part of the 30S ribosomal subunit.

The protein is Small ribosomal subunit protein eS8 of Methanocella arvoryzae (strain DSM 22066 / NBRC 105507 / MRE50).